Consider the following 505-residue polypeptide: Histidine ammonia-lyase (505 aa).

Positions 144-146 (ASG) form a cross-link, 5-imidazolinone (Ala-Gly). Serine 145 bears the 2,3-didehydroalanine (Ser) mark.

It belongs to the PAL/histidase family. In terms of processing, contains an active site 4-methylidene-imidazol-5-one (MIO), which is formed autocatalytically by cyclization and dehydration of residues Ala-Ser-Gly.

Its subcellular location is the cytoplasm. The enzyme catalyses L-histidine = trans-urocanate + NH4(+). Its pathway is amino-acid degradation; L-histidine degradation into L-glutamate; N-formimidoyl-L-glutamate from L-histidine: step 1/3. The polypeptide is Histidine ammonia-lyase (Legionella pneumophila (strain Corby)).